The following is a 1710-amino-acid chain: Centrosomal protein of 152 kDa (1710 aa).

Disordered stretches follow at residues 1 to 27 (MSLD…YERE), 39 to 79 (HDML…NEQM), and 108 to 139 (NRSK…SKCE). The tract at residues 1–60 (MSLDFGSVALPVQNEDEEYDEEDYEREKELQQLLTDLPHDMLDDDLSSPELQYSDCSEDG) is interaction with PLK4. Positions 14-24 (NEDEEYDEEDY) are enriched in acidic residues. Over residues 108 to 123 (NRSKTEDRHPVYHPEE) the composition is skewed to basic and acidic residues. A coiled-coil region spans residues 234–490 (ENMQIIQLQV…ISLYESAAKL (257 aa)). Positions 587–604 (DEKSIEVETKTDTSEKPK) are enriched in basic and acidic residues. The interval 587–611 (DEKSIEVETKTDTSEKPKNQLWPES) is disordered. 3 coiled-coil regions span residues 615–664 (DVVR…QDFD), 700–772 (EKQQ…LEKE), and 902–993 (AVSE…INEV). Positions 1120-1142 (ELSKDSASQGTGQGDPGPAAGHH) are disordered. Positions 1170 to 1241 (HCFQELEKAK…LEELQTLCKT (72 aa)) form a coiled coil. Threonine 1241 carries the phosphothreonine modification.

Belongs to the CEP152 family. Interacts (via N-terminus) with PLK4; the interaction is mutally exclusive with a PLK4:CEP192 interaction. Interacts (via C-terminus) with CPAP (via-N-terminus). Interacts with CINP. Interacts with CDK5RAP2, WDR62, CEP63 and CEP131. CEP63, CDK5RAP2, CEP152, WDR62 are proposed to form a stepwise assembled complex at the centrosome forming a ring near parental centrioles. Interacts with DEUP1; this interaction recruits CEP152 to the deuterosome. The interactions with CEP63 and DEUP1 are mutually exclusive. Interacts with CCDC66.

It is found in the cytoplasm. The protein resides in the cytoskeleton. It localises to the microtubule organizing center. The protein localises to the centrosome. Its subcellular location is the centriole. In terms of biological role, necessary for centrosome duplication; the function also seems to involve CEP63, CDK5RAP2 and WDR62 through a stepwise assembled complex at the centrosome that recruits CDK2 required for centriole duplication. Acts as a molecular scaffold facilitating the interaction of PLK4 and CPAP, 2 molecules involved in centriole formation. Proposed to snatch PLK4 away from PLK4:CEP92 complexes in early G1 daughter centriole and to reposition PLK4 at the outer boundary of a newly forming CEP152 ring structure. Also plays a key role in deuterosome-mediated centriole amplification in multiciliated that can generate more than 100 centrioles. Overexpression of CEP152 can drive amplification of centrioles. This Homo sapiens (Human) protein is Centrosomal protein of 152 kDa.